The sequence spans 366 residues: tRNA/tmRNA (uracil-C(5))-methyltransferase (366 aa).

S-adenosyl-L-methionine contacts are provided by Gln190, Tyr218, Asn223, Glu239, and Asp299. The active-site Nucleophile is Cys324. The active-site Proton acceptor is the Glu358.

It belongs to the class I-like SAM-binding methyltransferase superfamily. RNA M5U methyltransferase family. TrmA subfamily.

It catalyses the reaction uridine(54) in tRNA + S-adenosyl-L-methionine = 5-methyluridine(54) in tRNA + S-adenosyl-L-homocysteine + H(+). It carries out the reaction uridine(341) in tmRNA + S-adenosyl-L-methionine = 5-methyluridine(341) in tmRNA + S-adenosyl-L-homocysteine + H(+). Its function is as follows. Dual-specificity methyltransferase that catalyzes the formation of 5-methyluridine at position 54 (m5U54) in all tRNAs, and that of position 341 (m5U341) in tmRNA (transfer-mRNA). The chain is tRNA/tmRNA (uracil-C(5))-methyltransferase from Escherichia coli O7:K1 (strain IAI39 / ExPEC).